The primary structure comprises 371 residues: MSNASKKVIVGMSGGVDSSVSAYLLMQQGYQVEGLFMKNWEEDDTDEYCAASDDLADAEKVCETLGIELHTINFAAEYWDNVFEYFLEEYKAGRTPNPDIMCNKEIKFKAFLEFAAEALDADYIATGHYVRRQQRDGKWEMLRGLDSNKDQSYFLYTLSHEHIAQTLFPVGELEKPEVRRIAEEQGLVTADKKDSTGICFIGERKFKDFLQQYLPAKPGPIESVEGEALGEHEGLMYHTLGQRKGLHIGGMADNSGEPWYVVDKDVERNVLIVAQGKKHPRLYSQGLIAGQLHWVSRNAPPEAFDCTVKTRYRQQDIPCRVTPLSNGDFQVQFKEPVAAVTPGQSAVFYSDDVCLGGGIIEQRITDFEVKL.

ATP is bound by residues 11–18 (GMSGGVDS) and methionine 37. The tract at residues 97-99 (NPD) is interaction with target base in tRNA. Cysteine 102 acts as the Nucleophile in catalysis. Cysteines 102 and 199 form a disulfide. Residue glycine 127 coordinates ATP. Residues 149-151 (KDQ) are interaction with tRNA. Residue cysteine 199 is the Cysteine persulfide intermediate of the active site. An interaction with tRNA region spans residues 311–312 (RY).

This sequence belongs to the MnmA/TRMU family.

Its subcellular location is the cytoplasm. The catalysed reaction is S-sulfanyl-L-cysteinyl-[protein] + uridine(34) in tRNA + AH2 + ATP = 2-thiouridine(34) in tRNA + L-cysteinyl-[protein] + A + AMP + diphosphate + H(+). In terms of biological role, catalyzes the 2-thiolation of uridine at the wobble position (U34) of tRNA, leading to the formation of s(2)U34. The protein is tRNA-specific 2-thiouridylase MnmA of Idiomarina loihiensis (strain ATCC BAA-735 / DSM 15497 / L2-TR).